The primary structure comprises 348 residues: Methylthioribose-1-phosphate isomerase (348 aa).

Substrate contacts are provided by residues Arg-46–Ala-48, Arg-88, and Gln-194. The Proton donor role is filled by Asp-235. Residue Asn-245 to Lys-246 participates in substrate binding.

This sequence belongs to the eIF-2B alpha/beta/delta subunits family. MtnA subfamily.

The catalysed reaction is 5-(methylsulfanyl)-alpha-D-ribose 1-phosphate = 5-(methylsulfanyl)-D-ribulose 1-phosphate. Its pathway is amino-acid biosynthesis; L-methionine biosynthesis via salvage pathway; L-methionine from S-methyl-5-thio-alpha-D-ribose 1-phosphate: step 1/6. Functionally, catalyzes the interconversion of methylthioribose-1-phosphate (MTR-1-P) into methylthioribulose-1-phosphate (MTRu-1-P). This Desulforudis audaxviator (strain MP104C) protein is Methylthioribose-1-phosphate isomerase.